Here is a 457-residue protein sequence, read N- to C-terminus: C4-dicarboxylate transport protein (457 aa).

The next 9 membrane-spanning stretches (helical) occupy residues 22–42 (FQVV…PAFA), 55–75 (LVKM…IAGM), 90–110 (VYFL…AHVV), 138–158 (LTLV…AFTG), 168–188 (GPNI…LALV), 209–229 (LVHI…AFTI), 242–262 (WLVG…LGVV), 335–357 (LFIA…LAVA), and 376–396 (AATL…ILGV).

It belongs to the dicarboxylate/amino acid:cation symporter (DAACS) (TC 2.A.23) family.

It localises to the cell inner membrane. Responsible for the transport of dicarboxylates such as succinate, fumarate, and malate from the periplasm across the membrane. This is C4-dicarboxylate transport protein from Xanthomonas oryzae pv. oryzae (strain MAFF 311018).